The following is a 354-amino-acid chain: MAKQAIKRAKILAVKNNNKIGVLLINLGTPDEPSVPAVRRYLRQFLSDPKVIDVPSLVRWIIVHLCILPFRPKRSAKLYQKIWMPEGSPLLVYSEMLRERVGETLGDDFCVALGMRYGKPSIETALKKLQEAQCRQLIVLPLFPQYSTSTTASALEEVRAKNSFKEMTVIDRFFEEPHYIDSMTTLIHENLNEFQPDYFLFSYHGLPERHLVKSGCQLAICNRKNNCSPISSSNENCYRAQCFETSRLIAKKLNLTDQQYGVAFQSRLGRAKWIEPYTDKYLIELSKKGIKKLMVVCPSFPVDCLETLEEIGIRAQSQWQRLDGETLKLIPSLNAHPQWVNAIAKMAKKSLQLF.

His204 and Glu306 together coordinate Fe cation.

The protein belongs to the ferrochelatase family.

The protein localises to the cytoplasm. It carries out the reaction heme b + 2 H(+) = protoporphyrin IX + Fe(2+). Its pathway is porphyrin-containing compound metabolism; protoheme biosynthesis; protoheme from protoporphyrin-IX: step 1/1. Catalyzes the ferrous insertion into protoporphyrin IX. The protein is Ferrochelatase of Coxiella burnetii (strain RSA 493 / Nine Mile phase I).